The chain runs to 211 residues: Peptide methionine sulfoxide reductase MsrA (211 aa).

Cys-52 is an active-site residue.

This sequence belongs to the MsrA Met sulfoxide reductase family.

It carries out the reaction L-methionyl-[protein] + [thioredoxin]-disulfide + H2O = L-methionyl-(S)-S-oxide-[protein] + [thioredoxin]-dithiol. It catalyses the reaction [thioredoxin]-disulfide + L-methionine + H2O = L-methionine (S)-S-oxide + [thioredoxin]-dithiol. In terms of biological role, has an important function as a repair enzyme for proteins that have been inactivated by oxidation. Catalyzes the reversible oxidation-reduction of methionine sulfoxide in proteins to methionine. In Photobacterium profundum (strain SS9), this protein is Peptide methionine sulfoxide reductase MsrA.